The following is a 671-amino-acid chain: UvrABC system protein B (671 aa).

One can recognise a Helicase ATP-binding domain in the interval 25-412; the sequence is EGIEAGLSHQ…AGRVVEQVVR (388 aa). 38–45 is an ATP binding site; the sequence is GVTGSGKT. The Beta-hairpin motif lies at 91–114; it reads YYDYYQPEAYVPSSDTFIEKDASI. The Helicase C-terminal domain maps to 429 to 582; the sequence is QVDDLLSEIR…QIAFNEANGI (154 aa). Residues 632–667 enclose the UVR domain; it reads TKRIKQLEEKMMQFARDLEFEAAAQLRDEIAQLRER.

This sequence belongs to the UvrB family. Forms a heterotetramer with UvrA during the search for lesions. Interacts with UvrC in an incision complex.

It localises to the cytoplasm. Functionally, the UvrABC repair system catalyzes the recognition and processing of DNA lesions. A damage recognition complex composed of 2 UvrA and 2 UvrB subunits scans DNA for abnormalities. Upon binding of the UvrA(2)B(2) complex to a putative damaged site, the DNA wraps around one UvrB monomer. DNA wrap is dependent on ATP binding by UvrB and probably causes local melting of the DNA helix, facilitating insertion of UvrB beta-hairpin between the DNA strands. Then UvrB probes one DNA strand for the presence of a lesion. If a lesion is found the UvrA subunits dissociate and the UvrB-DNA preincision complex is formed. This complex is subsequently bound by UvrC and the second UvrB is released. If no lesion is found, the DNA wraps around the other UvrB subunit that will check the other stand for damage. The chain is UvrABC system protein B from Pseudomonas putida (strain ATCC 47054 / DSM 6125 / CFBP 8728 / NCIMB 11950 / KT2440).